A 605-amino-acid polypeptide reads, in one-letter code: MPSSLKGLGQAWLSSSSMALSACCSVSAWQKRLPVLAWLPRYSLQWLKMDFIAGLSVGLTVIPQALAYAEVAGLPPQYGLYSAFTGCFVYVFLGTSRDVTLGPTAIMSLLVSFYTFHEPAYAVLLTFLSGCIQLAMGLLHLGFLLDFISCPVIKGFTSAAAIIIGFGQIKNLLGLHNIPRQFFLQVYHTFLSVGETRLGDAILGLVCMVLLLVLKLMRDRIPPVHPEMPLCVRLSCGLVWTTATARNALVVSFAALVAYSFEVTGYQPFILTGEIAKGLPPVRVPPFSVTMANGTVSFTRMVQDLGAGLAVVPLIGLLESIAVAKAFASQNDYHVDANQELLAIGLTNMLGSFVSSYPITGSFGRTAVNAQSGVCTPAGGLVTGALVLLSLDYLTSLFYYIPKAALAAVIIMAVVPLFDTKIFGMLWRVKRLDLLPLCATFLLCFWEVQYGILAGTLVSTLFLLHFVARPKTQVSEGPVLILQLASGLHFPAIETLRDIVLSRALEVTSPRPAVLECSHVCSIDYTVVLGLAGLLEDFRKQGVSLVFSGLQAPVLHTLLAADLKGFQNFPTLEKAEQYVRQELGMEPYNVCEDSVPEHKVTLLTA.

Residues 1-50 lie on the Extracellular side of the membrane; that stretch reads MPSSLKGLGQAWLSSSSMALSACCSVSAWQKRLPVLAWLPRYSLQWLKMD. A helical transmembrane segment spans residues 51-71; that stretch reads FIAGLSVGLTVIPQALAYAEV. Residue A72 is a topological domain, cytoplasmic. A helical membrane pass occupies residues 73-93; that stretch reads GLPPQYGLYSAFTGCFVYVFL. Residues 94 to 98 are Extracellular-facing; it reads GTSRD. Residues 99–119 traverse the membrane as a helical segment; the sequence is VTLGPTAIMSLLVSFYTFHEP. Residues 120-122 lie on the Cytoplasmic side of the membrane; that stretch reads AYA. A helical membrane pass occupies residues 123–143; it reads VLLTFLSGCIQLAMGLLHLGF. Residues 144–146 lie on the Extracellular side of the membrane; the sequence is LLD. Residues 147–167 form a helical membrane-spanning segment; sequence FISCPVIKGFTSAAAIIIGFG. Residues 168-196 lie on the Cytoplasmic side of the membrane; the sequence is QIKNLLGLHNIPRQFFLQVYHTFLSVGET. The helical transmembrane segment at 197 to 217 threads the bilayer; sequence RLGDAILGLVCMVLLLVLKLM. Topologically, residues 218-249 are extracellular; sequence RDRIPPVHPEMPLCVRLSCGLVWTTATARNAL. A helical transmembrane segment spans residues 250 to 270; it reads VVSFAALVAYSFEVTGYQPFI. The Cytoplasmic portion of the chain corresponds to 271-303; sequence LTGEIAKGLPPVRVPPFSVTMANGTVSFTRMVQ. Residues 304 to 324 traverse the membrane as a helical segment; the sequence is DLGAGLAVVPLIGLLESIAVA. Residues 325–340 are Extracellular-facing; it reads KAFASQNDYHVDANQE. A helical membrane pass occupies residues 341–361; the sequence is LLAIGLTNMLGSFVSSYPITG. At 362 to 373 the chain is on the cytoplasmic side; the sequence is SFGRTAVNAQSG. The chain crosses the membrane as a helical span at residues 374–394; the sequence is VCTPAGGLVTGALVLLSLDYL. The Extracellular portion of the chain corresponds to 395–397; sequence TSL. A helical transmembrane segment spans residues 398-418; it reads FYYIPKAALAAVIIMAVVPLF. At 419-447 the chain is on the cytoplasmic side; the sequence is DTKIFGMLWRVKRLDLLPLCATFLLCFWE. A helical membrane pass occupies residues 448–468; sequence VQYGILAGTLVSTLFLLHFVA. The Extracellular portion of the chain corresponds to 469 to 605; that stretch reads RPKTQVSEGP…PEHKVTLLTA (137 aa). Residues 479–582 enclose the STAS domain; that stretch reads VLILQLASGL…EKAEQYVRQE (104 aa).

Belongs to the SLC26A/SulP transporter (TC 2.A.53) family.

The protein localises to the cell membrane. Its subcellular location is the lysosome membrane. It localises to the apical cell membrane. It is found in the basolateral cell membrane. The catalysed reaction is hydrogencarbonate(in) + chloride(out) = hydrogencarbonate(out) + chloride(in). It carries out the reaction sulfate(in) + H(+)(in) = sulfate(out) + H(+)(out). The enzyme catalyses oxalate(in) + chloride(out) = oxalate(out) + chloride(in). Sodium-independent anion exchanger mediating bicarbonate, chloride, sulfate and oxalate transport. Exhibits sodium-independent sulfate anion transporter activity that may cooperate with SLC26A2 to mediate DIDS-sensitive sulfate uptake into high endothelial venules endothelial cells (HEVEC). In the kidney, mediates chloride-bicarbonate exchange, facilitating V-ATPase-mediated acid secretion. May function as a chloride channel, playing an important role in moderating chloride homeostasis and neuronal activity in the cerebellum. In Cavia porcellus (Guinea pig), this protein is Sodium-independent sulfate anion transporter (Slc26a11).